A 74-amino-acid chain; its full sequence is uncharacterized protein (74 aa).

Composition is skewed to basic and acidic residues over residues Met1–Lys13 and Ile20–Glu60. The segment at Met1–Lys74 is disordered. Residues Asn64 to Lys74 show a composition bias toward polar residues.

This is an uncharacterized protein from Bacillus subtilis (strain 168).